A 646-amino-acid chain; its full sequence is Long-chain fatty acid transport protein 1 (646 aa).

Residues 1 to 13 (MRAPGAGSASVAS) are Extracellular-facing. A helical membrane pass occupies residues 14 to 34 (LVLLWLLGLPWTWSTAAALGV). Residues 35-646 (YVGGGGWRFL…TRICSGAFAL (612 aa)) are Cytoplasmic-facing. The tract at residues 191–475 (EMSGELGKSL…YISESATSKK (285 aa)) is sufficient for oligomerization. 246 to 257 (YIYTSGTTGLPK) is an AMP binding site.

Belongs to the ATP-dependent AMP-binding enzyme family. Self-associates. May function as a homodimer. Interacts with EPRS1; mediates the translocation of SLC27A1 from the cytoplasm to the plasma membrane thereby increasing the uptake of long-chain fatty acids. Interacts with DGAT2 and this interaction is enhanced in the presence of ZFYVE1.

The protein resides in the cell membrane. Its subcellular location is the endomembrane system. The protein localises to the cytoplasm. It catalyses the reaction a fatty acid(in) = a fatty acid(out). The enzyme catalyses (9Z)-octadecenoate(out) = (9Z)-octadecenoate(in). The catalysed reaction is hexadecanoate(out) = hexadecanoate(in). It carries out the reaction (5Z,8Z,11Z,14Z)-eicosatetraenoate(out) = (5Z,8Z,11Z,14Z)-eicosatetraenoate(in). It catalyses the reaction (9Z,12Z)-octadecadienoate(out) = (9Z,12Z)-octadecadienoate(in). The enzyme catalyses a long-chain fatty acid + ATP + CoA = a long-chain fatty acyl-CoA + AMP + diphosphate. The catalysed reaction is (5Z,8Z,11Z,14Z)-eicosatetraenoate + ATP + CoA = (5Z,8Z,11Z,14Z)-eicosatetraenoyl-CoA + AMP + diphosphate. It carries out the reaction a very long-chain fatty acid + ATP + CoA = a very long-chain fatty acyl-CoA + AMP + diphosphate. It catalyses the reaction tetracosanoate + ATP + CoA = tetracosanoyl-CoA + AMP + diphosphate. Its activity is regulated as follows. Inhibited by Triacsin C. In terms of biological role, mediates the import of long-chain fatty acids (LCFA) into the cell by facilitating their transport at the plasma membrane. Also functions as an acyl-CoA ligase catalyzing the ATP-dependent formation of fatty acyl-CoA using LCFA and very-long-chain fatty acids (VLCFA) as substrates, which prevents fatty acid efflux from cells and might drive more fatty acid uptake. May act directly as a bona fide transporter, or alternatively, in a cytoplasmic or membrane-associated multimeric protein complex to trap and draw fatty acids towards accumulation. Plays a pivotal role in regulating available LCFA substrates from exogenous sources in tissues undergoing high levels of beta-oxidation or triglyceride synthesis. May be involved in regulation of cholesterol metabolism. Probably involved in fatty acid transport across the blood barrier. In Bos taurus (Bovine), this protein is Long-chain fatty acid transport protein 1.